Consider the following 168-residue polypeptide: Transcription antitermination protein NusB (168 aa).

Belongs to the NusB family.

Its function is as follows. Involved in transcription antitermination. Required for transcription of ribosomal RNA (rRNA) genes. Binds specifically to the boxA antiterminator sequence of the ribosomal RNA (rrn) operons. The sequence is that of Transcription antitermination protein NusB from Chlamydia trachomatis serovar L2 (strain ATCC VR-902B / DSM 19102 / 434/Bu).